A 229-amino-acid chain; its full sequence is Ribonuclease HII (229 aa).

The 192-residue stretch at 34 to 225 folds into the RNase H type-2 domain; sequence GPVAGVDEAG…VKAAHDQWLQ (192 aa). Residues Asp-40, Glu-41, and Asp-134 each coordinate a divalent metal cation.

Belongs to the RNase HII family. It depends on Mn(2+) as a cofactor. Requires Mg(2+) as cofactor.

The protein resides in the cytoplasm. The catalysed reaction is Endonucleolytic cleavage to 5'-phosphomonoester.. Its function is as follows. Endonuclease that specifically degrades the RNA of RNA-DNA hybrids. This Corynebacterium diphtheriae (strain ATCC 700971 / NCTC 13129 / Biotype gravis) protein is Ribonuclease HII.